The following is a 33-amino-acid chain: MNIELALTLVSLVLVVSAGPLVVVLLSARGGNL.

Residues 5 to 25 (LALTLVSLVLVVSAGPLVVVL) traverse the membrane as a helical segment.

Belongs to the Psb30/Ycf12 family. As to quaternary structure, PSII is composed of 1 copy each of membrane proteins PsbA, PsbB, PsbC, PsbD, PsbE, PsbF, PsbH, PsbI, PsbJ, PsbK, PsbL, PsbM, PsbT, PsbX, PsbY, PsbZ, Psb30/Ycf12, peripheral proteins of the oxygen-evolving complex and a large number of cofactors. It forms dimeric complexes.

The protein resides in the plastid. The protein localises to the chloroplast thylakoid membrane. A core subunit of photosystem II (PSII), required for optimal photosynthesis, probably helps stabilize the reaction center. The polypeptide is Photosystem II reaction center protein Psb30 (Chlamydomonas reinhardtii (Chlamydomonas smithii)).